Reading from the N-terminus, the 36-residue chain is Conotoxin Bt11.4 (36 aa).

Disulfide bonds link Cys-2/Cys-16, Cys-9/Cys-21, Cys-15/Cys-26, and Cys-20/Cys-33.

The protein belongs to the conotoxin I1 superfamily. As to expression, expressed by the venom duct.

The protein localises to the secreted. The chain is Conotoxin Bt11.4 from Conus betulinus (Beech cone).